A 253-amino-acid chain; its full sequence is Major prion protein (253 aa).

The N-terminal stretch at 1-22 (MANLGCWMLVLFVATWSDLGLC) is a signal peptide. The segment at 23–38 (KKRPKPGGWNTGGSRY) is interaction with ADGRG6. Residues 23–230 (KKRPKPGGWN…ESQAYYQRGS (208 aa)) form an interaction with GRB2, ERI3 and SYN1 region. The interval 26 to 108 (PKPGGWNTGG…WNKPSKPKTN (83 aa)) is disordered. Repeat copies occupy residues 51–59 (PQGGGGWGQ), 60–67 (PHGGGWGQ), 68–75 (PHGGGWGQ), 76–83 (PHGGGWGQ), and 84–91 (PHGGGWGQ). Residues 51–91 (PQGGGGWGQPHGGGWGQPHGGGWGQPHGGGWGQPHGGGWGQ) are 5 X 8 AA tandem repeats of P-H-G-G-G-W-G-Q. The span at 52–95 (QGGGGWGQPHGGGWGQPHGGGWGQPHGGGWGQPHGGGWGQGGGT) shows a compositional bias: gly residues. The Cu(2+) site is built by His61, Gly62, Gly63, His69, Gly70, Gly71, His77, Gly78, Gly79, His85, Gly86, and Gly87. A disulfide bridge connects residues Cys179 and Cys214. Asn181 and Asn197 each carry an N-linked (GlcNAc...) asparagine glycan. Residue Ser230 is the site of GPI-anchor amidated serine attachment. The propeptide at 231–253 (SMVLFSSPPVILLISFLIFLIVG) is removed in mature form.

The protein belongs to the prion family. As to quaternary structure, monomer and homodimer. Has a tendency to aggregate into amyloid fibrils containing a cross-beta spine, formed by a steric zipper of superposed beta-strands. Soluble oligomers may represent an intermediate stage on the path to fibril formation. Copper binding may promote oligomerization. Interacts with GRB2, APP, ERI3/PRNPIP and SYN1. Mislocalized cytosolically exposed PrP interacts with MGRN1; this interaction alters MGRN1 subcellular location and causes lysosomal enlargement. Interacts with APP. Interacts with KIAA1191. Interacts with ADGRG6.

Its subcellular location is the cell membrane. It localises to the golgi apparatus. Functionally, its primary physiological function is unclear. May play a role in neuronal development and synaptic plasticity. May be required for neuronal myelin sheath maintenance. May promote myelin homeostasis through acting as an agonist for ADGRG6 receptor. May play a role in iron uptake and iron homeostasis. Soluble oligomers are toxic to cultured neuroblastoma cells and induce apoptosis (in vitro). Association with GPC1 (via its heparan sulfate chains) targets PRNP to lipid rafts. Also provides Cu(2+) or Zn(2+) for the ascorbate-mediated GPC1 deaminase degradation of its heparan sulfate side chains. This is Major prion protein (PRNP) from Gorilla gorilla gorilla (Western lowland gorilla).